We begin with the raw amino-acid sequence, 383 residues long: Acetylornithine deacetylase (383 aa).

Position 80 (His80) interacts with Zn(2+). Asp82 is a catalytic residue. Asp112 contributes to the Zn(2+) binding site. Glu144 is a catalytic residue. Residues Glu145, Glu169, and His355 each coordinate Zn(2+).

It belongs to the peptidase M20A family. ArgE subfamily. Homodimer. Zn(2+) is required as a cofactor. Requires Co(2+) as cofactor. The cofactor is glutathione.

The protein resides in the cytoplasm. It carries out the reaction N(2)-acetyl-L-ornithine + H2O = L-ornithine + acetate. It functions in the pathway amino-acid biosynthesis; L-arginine biosynthesis; L-ornithine from N(2)-acetyl-L-ornithine (linear): step 1/1. Catalyzes the hydrolysis of the amide bond of N(2)-acetylated L-amino acids. Cleaves the acetyl group from N-acetyl-L-ornithine to form L-ornithine, an intermediate in L-arginine biosynthesis pathway, and a branchpoint in the synthesis of polyamines. The chain is Acetylornithine deacetylase from Escherichia coli O157:H7.